The following is a 150-amino-acid chain: Ribonuclease K6 (150 aa).

Positions 1–23 are cleaved as a signal peptide; that stretch reads MVLCFPLLLLLLVLWGPVCPLHA. Histidine 38 acts as the Proton acceptor in catalysis. 4 cysteine pairs are disulfide-bonded: cysteine 46–cysteine 104, cysteine 60–cysteine 114, cysteine 78–cysteine 129, and cysteine 85–cysteine 92. N-linked (GlcNAc...) asparagine glycosylation occurs at asparagine 55. Substrate-binding positions include 61 to 65 and lysine 86; that span reads KHQNT. Residue asparagine 100 is glycosylated (N-linked (GlcNAc...) asparagine). Arginine 105 contacts substrate. Histidine 145 functions as the Proton donor in the catalytic mechanism.

It belongs to the pancreatic ribonuclease family. In terms of assembly, interacts (via N-terminus) with bacterial lipopolysaccharide (LPS). As to expression, highly expressed in spleen (at protein level). Has little or no expression in healthy kidneys (at protein level). Detected in interstitial leukocytes in infected kidneys (at protein level). Expressed in ureter where it localizes to urothelial and submucosal leukocytes (at protein level). Strong expression in lung and thymus, and lower expression in heart, placenta, pancreas, liver, brain and skeletal muscle. Also expressed in monocytes and neutrophils.

It is found in the secreted. The protein resides in the lysosome. The protein localises to the cytoplasmic granule. In terms of biological role, ribonuclease which shows a preference for the pyrimidines uridine and cytosine. Has potent antibacterial activity against a range of Gram-positive and Gram-negative bacteria, including P.aeruginosa, A.baumanii, M.luteus, S.aureus, E.faecalis, E.faecium, S.saprophyticus and E.coli. Causes loss of bacterial membrane integrity, and also promotes agglutination of Gram-negative bacteria. Probably contributes to urinary tract sterility. Bactericidal activity is independent of RNase activity. In Homo sapiens (Human), this protein is Ribonuclease K6 (RNASE6).